Reading from the N-terminus, the 334-residue chain is Holliday junction branch migration complex subunit RuvB (334 aa).

The interval 4 to 186 (ADRLIAPENP…FGITQRLEYY (183 aa)) is large ATPase domain (RuvB-L). ATP-binding positions include isoleucine 25, arginine 26, glycine 67, lysine 70, threonine 71, threonine 72, 133–135 (EDY), arginine 176, tyrosine 186, and arginine 223. Threonine 71 provides a ligand contact to Mg(2+). The interval 187-257 (KVKDLQDIVQ…TADKALNMLD (71 aa)) is small ATPAse domain (RuvB-S). The tract at residues 260–334 (AEGFDYMDRK…RAYLHFGIEK (75 aa)) is head domain (RuvB-H). Arginine 315 and arginine 320 together coordinate DNA.

The protein belongs to the RuvB family. As to quaternary structure, homohexamer. Forms an RuvA(8)-RuvB(12)-Holliday junction (HJ) complex. HJ DNA is sandwiched between 2 RuvA tetramers; dsDNA enters through RuvA and exits via RuvB. An RuvB hexamer assembles on each DNA strand where it exits the tetramer. Each RuvB hexamer is contacted by two RuvA subunits (via domain III) on 2 adjacent RuvB subunits; this complex drives branch migration. In the full resolvosome a probable DNA-RuvA(4)-RuvB(12)-RuvC(2) complex forms which resolves the HJ.

The protein resides in the cytoplasm. The catalysed reaction is ATP + H2O = ADP + phosphate + H(+). Its function is as follows. The RuvA-RuvB-RuvC complex processes Holliday junction (HJ) DNA during genetic recombination and DNA repair, while the RuvA-RuvB complex plays an important role in the rescue of blocked DNA replication forks via replication fork reversal (RFR). RuvA specifically binds to HJ cruciform DNA, conferring on it an open structure. The RuvB hexamer acts as an ATP-dependent pump, pulling dsDNA into and through the RuvAB complex. RuvB forms 2 homohexamers on either side of HJ DNA bound by 1 or 2 RuvA tetramers; 4 subunits per hexamer contact DNA at a time. Coordinated motions by a converter formed by DNA-disengaged RuvB subunits stimulates ATP hydrolysis and nucleotide exchange. Immobilization of the converter enables RuvB to convert the ATP-contained energy into a lever motion, pulling 2 nucleotides of DNA out of the RuvA tetramer per ATP hydrolyzed, thus driving DNA branch migration. The RuvB motors rotate together with the DNA substrate, which together with the progressing nucleotide cycle form the mechanistic basis for DNA recombination by continuous HJ branch migration. Branch migration allows RuvC to scan DNA until it finds its consensus sequence, where it cleaves and resolves cruciform DNA. The protein is Holliday junction branch migration complex subunit RuvB of Vibrio campbellii (strain ATCC BAA-1116).